Reading from the N-terminus, the 114-residue chain is Protein ORF3 (114 aa).

2 hydrophobic regions span residues 6–24 and 33–53; these read WALGLFCCCSSCFCLCCSR and AVVGGAAAVPAVVSGVTGLIL. Residues 28-68 are interaction with host HPX; that stretch reads VSRLAAVVGGAAAVPAVVSGVTGLILSPSQSPIFIQPTPSP. Residues 48-72 form an interaction with the capsid protein region; sequence VTGLILSPSQSPIFIQPTPSPRMSP. Ser-71 is modified (phosphoserine; by host). The homodimerization, and interaction with host AMBP/bikunin stretch occupies residues 72 to 114; the sequence is PLRPGLDLVFANPSDHSAPLGATRPSAPPLPHVVDLPQLGPRR. Residues 85–114 are disordered; the sequence is SDHSAPLGATRPSAPPLPHVVDLPQLGPRR. The segment at 95–104 is interaction with host SRC, HCK, FYN, PIK3R3 and GRB2; sequence RPSAPPLPHV. A PTAP/PSAP motif motif is present at residues 96-99; that stretch reads PSAP.

It belongs to the hepevirus ORF3 protein family. Forms homooligomers. Interacts with host SRC, HCK, FYN, PIK3R3 and GRB2 (via SH3 domain); binding does not activate the kinases. Interacts with host AMBP/bikunin and AMBP/alpha-1-microglobulin peptides. Interacts with host HPX/hemopexin. Interacts (when phosphorylated) with capsid protein ORF2. Interacts with host TSG101; this interaction plays a role in viral release from the host cell. Interacts with host SIRPA; this interaction down-regulates the phosphorylation of host IRF3. Post-translationally, palmitoylated in the N-terminus.

The protein resides in the host endoplasmic reticulum membrane. Its subcellular location is the host cytoplasm. It localises to the host cytoskeleton. It is found in the virion. The protein localises to the host cell membrane. Small multifunctional phosphoprotein involved in virion morphogenesis, egress and counteracting host innate immunity. Plays critical roles in the final steps of viral release by interacting with host TSG101, a member of the vacuolar protein-sorting pathway and using other cellular host proteins involved in vesicle formation pathway. Also acts as a viroporin and forms ion conductive pores allowing viral particle release. Impairs the generation of type I interferon by down-regulating host TLR3 and TLR7 as well as their downstream signaling pathways. Down-regulates the phosphorylation of host IRF3 via the interaction with host SIRP-alpha, thereby inhibiting IFN-I expression. Interacts with host microtubules. This Hepatitis E virus genotype 1 (isolate Human/India/Hyderabad) (HEV-1) protein is Protein ORF3.